A 1080-amino-acid chain; its full sequence is Serine/threonine-protein kinase KIC1 (1080 aa).

Positions 23–276 constitute a Protein kinase domain; the sequence is FKRTEVIGRG…ADDLLKSKFI (254 aa). ATP-binding positions include 29-37 and Lys-52; that span reads IGRGKFGVV. Asp-144 (proton acceptor) is an active-site residue. 4 disordered regions span residues 308-347, 615-760, 787-831, and 901-956; these read EGSI…EIKR, KARS…LAPP, STLN…LQMP, and SQSI…NTGN. Over residues 312 to 326 the composition is skewed to low complexity; that stretch reads PENEPSKPSEAPKPS. Residues 615-626 are compositionally biased toward polar residues; that stretch reads KARSSTVTAGTP. Positions 627-638 are enriched in low complexity; sequence SSSSSIQYKSPS. Over residues 656 to 673 the composition is skewed to polar residues; the sequence is STITNQKLGSAVASNSGI. Residues 674–689 are compositionally biased toward low complexity; it reads SSTPNNSNNYNNNTDS. Positions 693–726 are enriched in polar residues; it reads RGSSGSNTANSTQMGITNPGNVTKLSTHKASSPS. Residue Ser-735 is modified to Phosphoserine. Polar residues predominate over residues 743 to 756; it reads SPTQNIGHNSTHTN. Low complexity predominate over residues 787-807; the sequence is STLNTISGNSSNNLTSSNYFS. The segment covering 808-821 has biased composition (basic and acidic residues); sequence NEKEGSRVNGDFKR. Residues 901–913 show a composition bias toward polar residues; sequence SQSISNRKNSSAS. Positions 918–956 are enriched in low complexity; it reads NILGSSVSGNVSGIGNNNVGSNNNSGPNNSVPLSANTGN.

It belongs to the protein kinase superfamily. Ser/Thr protein kinase family. Interacts with CDC31.

It catalyses the reaction L-seryl-[protein] + ATP = O-phospho-L-seryl-[protein] + ADP + H(+). The catalysed reaction is L-threonyl-[protein] + ATP = O-phospho-L-threonyl-[protein] + ADP + H(+). In terms of biological role, protein kinase involved in morphogenesis and cell integrity. The polypeptide is Serine/threonine-protein kinase KIC1 (KIC1) (Saccharomyces cerevisiae (strain ATCC 204508 / S288c) (Baker's yeast)).